The following is a 182-amino-acid chain: ATP synthase subunit delta (182 aa).

It belongs to the ATPase delta chain family. F-type ATPases have 2 components, F(1) - the catalytic core - and F(0) - the membrane proton channel. F(1) has five subunits: alpha(3), beta(3), gamma(1), delta(1), epsilon(1). CF(0) has four main subunits: a(1), b(1), b'(1) and c(10-14). The alpha and beta chains form an alternating ring which encloses part of the gamma chain. F(1) is attached to F(0) by a central stalk formed by the gamma and epsilon chains, while a peripheral stalk is formed by the delta, b and b' chains.

The protein resides in the cellular thylakoid membrane. Its function is as follows. F(1)F(0) ATP synthase produces ATP from ADP in the presence of a proton or sodium gradient. F-type ATPases consist of two structural domains, F(1) containing the extramembraneous catalytic core and F(0) containing the membrane proton channel, linked together by a central stalk and a peripheral stalk. During catalysis, ATP synthesis in the catalytic domain of F(1) is coupled via a rotary mechanism of the central stalk subunits to proton translocation. Functionally, this protein is part of the stalk that links CF(0) to CF(1). It either transmits conformational changes from CF(0) to CF(1) or is implicated in proton conduction. The protein is ATP synthase subunit delta of Synechococcus sp. (strain JA-2-3B'a(2-13)) (Cyanobacteria bacterium Yellowstone B-Prime).